A 306-amino-acid polypeptide reads, in one-letter code: Pantothenate kinase (306 aa).

90-97 (GSVAVGKS) is a binding site for ATP.

It belongs to the prokaryotic pantothenate kinase family.

The protein resides in the cytoplasm. It catalyses the reaction (R)-pantothenate + ATP = (R)-4'-phosphopantothenate + ADP + H(+). Its pathway is cofactor biosynthesis; coenzyme A biosynthesis; CoA from (R)-pantothenate: step 1/5. This chain is Pantothenate kinase, found in Listeria monocytogenes serotype 4b (strain CLIP80459).